The sequence spans 264 residues: Thymidylate synthase (264 aa).

Arg-21 contributes to the dUMP binding site. Position 51 (His-51) interacts with (6R)-5,10-methylene-5,6,7,8-tetrahydrofolate. Residue 126–127 coordinates dUMP; that stretch reads RR. Cys-146 functions as the Nucleophile in the catalytic mechanism. DUMP contacts are provided by residues 166–169, Asn-177, and 207–209; these read RSAD and HLY. Asp-169 serves as a coordination point for (6R)-5,10-methylene-5,6,7,8-tetrahydrofolate. Residue Ala-263 coordinates (6R)-5,10-methylene-5,6,7,8-tetrahydrofolate.

This sequence belongs to the thymidylate synthase family. Bacterial-type ThyA subfamily. Homodimer.

It localises to the cytoplasm. The enzyme catalyses dUMP + (6R)-5,10-methylene-5,6,7,8-tetrahydrofolate = 7,8-dihydrofolate + dTMP. Its pathway is pyrimidine metabolism; dTTP biosynthesis. In terms of biological role, catalyzes the reductive methylation of 2'-deoxyuridine-5'-monophosphate (dUMP) to 2'-deoxythymidine-5'-monophosphate (dTMP) while utilizing 5,10-methylenetetrahydrofolate (mTHF) as the methyl donor and reductant in the reaction, yielding dihydrofolate (DHF) as a by-product. This enzymatic reaction provides an intracellular de novo source of dTMP, an essential precursor for DNA biosynthesis. The chain is Thymidylate synthase from Hahella chejuensis (strain KCTC 2396).